The following is a 193-amino-acid chain: UPF0301 protein SAV_5129 (193 aa).

The protein belongs to the UPF0301 (AlgH) family.

This Streptomyces avermitilis (strain ATCC 31267 / DSM 46492 / JCM 5070 / NBRC 14893 / NCIMB 12804 / NRRL 8165 / MA-4680) protein is UPF0301 protein SAV_5129.